A 248-amino-acid polypeptide reads, in one-letter code: Carboxy-S-adenosyl-L-methionine synthase (248 aa).

S-adenosyl-L-methionine contacts are provided by residues Tyr40, 65-67 (GCS), 95-96 (DN), 123-124 (DI), Asn138, and Arg205.

The protein belongs to the class I-like SAM-binding methyltransferase superfamily. Cx-SAM synthase family. In terms of assembly, homodimer.

It catalyses the reaction prephenate + S-adenosyl-L-methionine = carboxy-S-adenosyl-L-methionine + 3-phenylpyruvate + H2O. Catalyzes the conversion of S-adenosyl-L-methionine (SAM) to carboxy-S-adenosyl-L-methionine (Cx-SAM). The polypeptide is Carboxy-S-adenosyl-L-methionine synthase (Hahella chejuensis (strain KCTC 2396)).